A 303-amino-acid polypeptide reads, in one-letter code: Monoglyceride lipase (303 aa).

Residue threonine 10 is modified to Phosphothreonine. Tyrosine 58 carries the post-translational modification 3'-nitrotyrosine. Serine 122 acts as the Nucleophile in catalysis. Residues aspartate 239 and histidine 269 each act as charge relay system in the active site.

Belongs to the AB hydrolase superfamily. Monoacylglycerol lipase family. Homodimer. Detected in adipose tissue, lung, liver, kidney, brain and heart.

It is found in the cytoplasm. It localises to the cytosol. The protein localises to the membrane. The enzyme catalyses Hydrolyzes glycerol monoesters of long-chain fatty acids.. It catalyses the reaction a 1-acylglycerol + H2O = glycerol + a fatty acid + H(+). The catalysed reaction is a 2-acylglycerol + H2O = glycerol + a fatty acid + H(+). It carries out the reaction 1-octanoylglycerol + H2O = octanoate + glycerol + H(+). The enzyme catalyses 2-(5Z,8Z,11Z,14Z-eicosatetraenoyl)-glycerol + H2O = glycerol + (5Z,8Z,11Z,14Z)-eicosatetraenoate + H(+). It catalyses the reaction 1-decanoylglycerol + H2O = decanoate + glycerol + H(+). The catalysed reaction is 1-dodecanoylglycerol + H2O = dodecanoate + glycerol + H(+). It carries out the reaction 1-tetradecanoylglycerol + H2O = tetradecanoate + glycerol + H(+). The enzyme catalyses 2-hexadecanoylglycerol + H2O = glycerol + hexadecanoate + H(+). It catalyses the reaction 1-(9Z-octadecenoyl)-glycerol + H2O = glycerol + (9Z)-octadecenoate + H(+). The catalysed reaction is 2-(9Z-octadecenoyl)-glycerol + H2O = glycerol + (9Z)-octadecenoate + H(+). It carries out the reaction 2-(9Z,12Z-octadecadienoyl)-glycerol + H2O = (9Z,12Z)-octadecadienoate + glycerol + H(+). The enzyme catalyses 1-(5Z,8Z,11Z,14Z-eicosatetraenoyl)-glycerol + H2O = glycerol + (5Z,8Z,11Z,14Z)-eicosatetraenoate + H(+). It catalyses the reaction 1-(9Z,12Z-octadecadienoyl)-glycerol + H2O = (9Z,12Z)-octadecadienoate + glycerol + H(+). The catalysed reaction is 1-hexadecanoylglycerol + H2O = glycerol + hexadecanoate + H(+). It carries out the reaction 1-octadecanoylglycerol + H2O = octadecanoate + glycerol + H(+). The enzyme catalyses prostaglandin E2 1-glyceryl ester + H2O = prostaglandin E2 + glycerol + H(+). It catalyses the reaction prostaglandin D2-1-glycerol ester + H2O = prostaglandin D2 + glycerol + H(+). The catalysed reaction is 2-glyceryl-15-deoxy-Delta(12,14)-prostaglandin J2 + H2O = 15-deoxy-Delta(12,14)-prostaglandin J2 + glycerol + H(+). It carries out the reaction prostaglandin F2alpha 1-glyceryl ester + H2O = prostaglandin F2alpha + glycerol + H(+). Its pathway is glycerolipid metabolism; triacylglycerol degradation. Converts monoacylglycerides to free fatty acids and glycerol. Hydrolyzes the endocannabinoid 2-arachidonoylglycerol, and thereby contributes to the regulation of endocannabinoid signaling, nociperception and perception of pain. Regulates the levels of fatty acids that serve as signaling molecules and promote cancer cell migration, invasion and tumor growth. This Homo sapiens (Human) protein is Monoglyceride lipase.